Reading from the N-terminus, the 184-residue chain is uncharacterized protein (184 aa).

An N-terminal signal peptide occupies residues 1 to 20 (MYQLEKIWVLLCLALVGVLG).

This is an uncharacterized protein from Drosophila melanogaster (Fruit fly).